Reading from the N-terminus, the 237-residue chain is Lectin alpha chain (237 aa).

2 residues coordinate Mn(2+): Glu-8 and Asp-10. Positions 10, 12, 14, and 19 each coordinate Ca(2+). A carbohydrate is bound at residue Tyr-12. Residues Asp-19, His-24, and Ser-34 each coordinate Mn(2+). Position 99-100 (99-100) interacts with a carbohydrate; it reads LY. Asp-208 provides a ligand contact to Ca(2+). Position 228 (Arg-228) interacts with a carbohydrate.

Belongs to the leguminous lectin family. As to quaternary structure, homotetramer. In terms of processing, the beta and gamma chains are produced by partial proteolytic processing of the lectin alpha chain by an asparaginyl endopeptidase. Mixture of 60% alpha lectin and 40% of its beta and gamma proteolytic fragments.

Functionally, D-mannose/D-glucose-binding lectin. Has anti-inflammatory activity in rats. Induces histamine release in mast cells from rat. Induces lymphocyte proliferation and IFNG production. Shows toxicity against the aquatic snail B.glabrata at concentrations higher than 50 ug/ml. This Dioclea grandiflora (Mucana) protein is Lectin alpha chain.